Consider the following 437-residue polypeptide: Adenosylmethionine-8-amino-7-oxononanoate aminotransferase (437 aa).

A substrate-binding site is contributed by tryptophan 64. Pyridoxal 5'-phosphate is bound at residue 124 to 125 (GS). Tyrosine 157 contributes to the substrate binding site. Aspartate 254 contacts pyridoxal 5'-phosphate. Residues lysine 283 and glycine 316 each contribute to the substrate site. Lysine 283 is subject to N6-(pyridoxal phosphate)lysine. 317–318 (PT) contacts pyridoxal 5'-phosphate. Residue arginine 400 participates in substrate binding.

Belongs to the class-III pyridoxal-phosphate-dependent aminotransferase family. BioA subfamily. As to quaternary structure, homodimer. Requires pyridoxal 5'-phosphate as cofactor.

Its subcellular location is the cytoplasm. It catalyses the reaction (8S)-8-amino-7-oxononanoate + S-adenosyl-L-methionine = S-adenosyl-4-methylsulfanyl-2-oxobutanoate + (7R,8S)-7,8-diammoniononanoate. It participates in cofactor biosynthesis; biotin biosynthesis; 7,8-diaminononanoate from 8-amino-7-oxononanoate (SAM route): step 1/1. In terms of biological role, catalyzes the transfer of the alpha-amino group from S-adenosyl-L-methionine (SAM) to 7-keto-8-aminopelargonic acid (KAPA) to form 7,8-diaminopelargonic acid (DAPA). It is the only aminotransferase known to utilize SAM as an amino donor. The polypeptide is Adenosylmethionine-8-amino-7-oxononanoate aminotransferase (bioA) (Mycobacterium tuberculosis (strain CDC 1551 / Oshkosh)).